Reading from the N-terminus, the 229-residue chain is Bcl-2-like protein 1 (229 aa).

The short motif at 4–24 is the BH4 element; it reads SNRELVIDFVSYKLSQRGHCW. A BH3 motif is present at residues 82–96; sequence VRQALRDAGDEFELR. The BH1 motif lies at 125 to 144; the sequence is ELFHDGVNWGRIVAFFSFGG. Positions 176 to 191 match the BH2 motif; sequence PWIQENGGWERFVDLY. Residues 206-223 form a helical membrane-spanning segment; it reads FNKWLLTGATVAGVLLLG.

This sequence belongs to the Bcl-2 family. In terms of tissue distribution, highest expression in organs with lymphoid development.

It localises to the mitochondrion membrane. The protein localises to the nucleus membrane. The protein resides in the mitochondrion matrix. It is found in the cytoplasm. Its subcellular location is the cytoskeleton. It localises to the microtubule organizing center. The protein localises to the centrosome. The protein resides in the cytosol. It is found in the cytoplasmic vesicle. Its subcellular location is the secretory vesicle. It localises to the synaptic vesicle membrane. In terms of biological role, dominant regulator of apoptotic cell death. The long form displays cell death repressor activity, whereas the short isoform promotes apoptosis. Also acts as a regulator of G2 checkpoint and progression to cytokinesis during mitosis. In Gallus gallus (Chicken), this protein is Bcl-2-like protein 1 (BCL2L1).